A 1269-amino-acid chain; its full sequence is Protein strawberry notch homolog 1 (1269 aa).

Positions 21–47 (NDLFDVDGGDAGLATPTPPSVQQQQPP) are disordered. Lysine 113 bears the N6-acetyllysine mark. Serine 126 and serine 178 each carry phosphoserine. At lysine 377 the chain carries N6-acetyllysine. Positions 652–725 (PSNNSSPRDS…SLITSQDAVE (74 aa)) are disordered. A phosphoserine mark is found at serine 656, serine 657, and serine 661. Acidic residues predominate over residues 679-693 (SGSESDVSDNEESDY). Serine 700 and serine 701 each carry phosphoserine. A coiled-coil region spans residues 719-746 (TSQDAVERAQQMKKDLLDKLEKLAEDLP). Lysine 1098 is subject to N6-acetyllysine. Serine 1262 carries the phosphoserine modification.

This sequence belongs to the SBNO family.

It is found in the nucleus. Functionally, plays a crucial role in the regulation of neural stem cells (NSCs) proliferation. Enhances the phosphorylation of GSK3B through the PI3K-Akt signaling pathway, thereby upregulating the Wnt/beta-catenin signaling pathway and promoting the proliferation of NSCs. Improves ischemic stroke recovery while inhibiting neuroinflammation through small extracellular vesicles (sEVs)-mediated mechanism. Enhances the secretion of sEVs from NSCs, which in turn inhibit both the MAPK and NF-kappaB pathways in microglia. This inhibition suppresses the pro-inflammatory M1 polarization of microglia, promoting a shift towards the M2 anti-inflammatory phenotype, which is beneficial for reducing neuroinflammation. In Rattus norvegicus (Rat), this protein is Protein strawberry notch homolog 1 (Sbno1).